The primary structure comprises 350 residues: Biotin synthase (350 aa).

The Radical SAM core domain maps to 54–278; sequence REIQLSTLLS…TMPQSYVRLS (225 aa). Residues C69, C73, and C76 each contribute to the [4Fe-4S] cluster site. [2Fe-2S] cluster is bound by residues C113, C144, C204, and R276.

Belongs to the radical SAM superfamily. Biotin synthase family. In terms of assembly, homodimer. [4Fe-4S] cluster serves as cofactor. The cofactor is [2Fe-2S] cluster.

The enzyme catalyses (4R,5S)-dethiobiotin + (sulfur carrier)-SH + 2 reduced [2Fe-2S]-[ferredoxin] + 2 S-adenosyl-L-methionine = (sulfur carrier)-H + biotin + 2 5'-deoxyadenosine + 2 L-methionine + 2 oxidized [2Fe-2S]-[ferredoxin]. The protein operates within cofactor biosynthesis; biotin biosynthesis; biotin from 7,8-diaminononanoate: step 2/2. Its function is as follows. Catalyzes the conversion of dethiobiotin (DTB) to biotin by the insertion of a sulfur atom into dethiobiotin via a radical-based mechanism. In Neisseria meningitidis serogroup C / serotype 2a (strain ATCC 700532 / DSM 15464 / FAM18), this protein is Biotin synthase.